The primary structure comprises 50 residues: Protein HokE (50 aa).

Residues 5–25 (YALVAVIVLCLTVLGFTLLVG) traverse the membrane as a helical segment.

It belongs to the Hok/Gef family.

It is found in the cell inner membrane. Functionally, toxic component of a type I toxin-antitoxin (TA) system. When overexpressed kills cells within minutes; causes collapse of the transmembrane potential and arrest of respiration. Its toxic effect is probably neutralized by an antisense antitoxin Sok RNA. In Escherichia coli O157:H7, this protein is Protein HokE (hokE).